Consider the following 282-residue polypeptide: Energy-coupling factor transporter ATP-binding protein EcfA1 (282 aa).

The region spanning 6–243 (ISFDHVTFTY…VEMLKRIGLD (238 aa)) is the ABC transporter domain. 40-47 (GHNGSGKS) lines the ATP pocket.

Belongs to the ABC transporter superfamily. Energy-coupling factor EcfA family. Forms a stable energy-coupling factor (ECF) transporter complex composed of 2 membrane-embedded substrate-binding proteins (S component), 2 ATP-binding proteins (A component) and 2 transmembrane proteins (T component).

It is found in the cell membrane. ATP-binding (A) component of a common energy-coupling factor (ECF) ABC-transporter complex. Unlike classic ABC transporters this ECF transporter provides the energy necessary to transport a number of different substrates. In Lactobacillus delbrueckii subsp. bulgaricus (strain ATCC BAA-365 / Lb-18), this protein is Energy-coupling factor transporter ATP-binding protein EcfA1.